A 231-amino-acid polypeptide reads, in one-letter code: Orotate phosphoribosyltransferase (231 aa).

5-phospho-alpha-D-ribose 1-diphosphate contacts are provided by residues K27, 79 to 80 (YK), R106, K107, K110, H112, and 133 to 141 (DDVMTAGTA). Positions 137 and 166 each coordinate orotate.

It belongs to the purine/pyrimidine phosphoribosyltransferase family. PyrE subfamily. In terms of assembly, homodimer. Mg(2+) is required as a cofactor.

The catalysed reaction is orotidine 5'-phosphate + diphosphate = orotate + 5-phospho-alpha-D-ribose 1-diphosphate. The protein operates within pyrimidine metabolism; UMP biosynthesis via de novo pathway; UMP from orotate: step 1/2. Catalyzes the transfer of a ribosyl phosphate group from 5-phosphoribose 1-diphosphate to orotate, leading to the formation of orotidine monophosphate (OMP). This is Orotate phosphoribosyltransferase from Bifidobacterium adolescentis (strain ATCC 15703 / DSM 20083 / NCTC 11814 / E194a).